Consider the following 207-residue polypeptide: dTTP/UTP pyrophosphatase (207 aa).

Aspartate 87 (proton acceptor) is an active-site residue.

The protein belongs to the Maf family. YhdE subfamily. Requires a divalent metal cation as cofactor.

It is found in the cytoplasm. The catalysed reaction is dTTP + H2O = dTMP + diphosphate + H(+). It carries out the reaction UTP + H2O = UMP + diphosphate + H(+). Functionally, nucleoside triphosphate pyrophosphatase that hydrolyzes dTTP and UTP. May have a dual role in cell division arrest and in preventing the incorporation of modified nucleotides into cellular nucleic acids. This is dTTP/UTP pyrophosphatase from Bordetella bronchiseptica (strain ATCC BAA-588 / NCTC 13252 / RB50) (Alcaligenes bronchisepticus).